A 1400-amino-acid chain; its full sequence is DNA-directed RNA polymerase subunit beta' (1400 aa).

The Zn(2+) site is built by cysteine 71, cysteine 73, cysteine 86, and cysteine 89. The Mg(2+) site is built by aspartate 462, aspartate 464, and aspartate 466. 4 residues coordinate Zn(2+): cysteine 811, cysteine 885, cysteine 892, and cysteine 895.

Belongs to the RNA polymerase beta' chain family. The RNAP catalytic core consists of 2 alpha, 1 beta, 1 beta' and 1 omega subunit. When a sigma factor is associated with the core the holoenzyme is formed, which can initiate transcription. Mg(2+) is required as a cofactor. Requires Zn(2+) as cofactor.

It carries out the reaction RNA(n) + a ribonucleoside 5'-triphosphate = RNA(n+1) + diphosphate. Functionally, DNA-dependent RNA polymerase catalyzes the transcription of DNA into RNA using the four ribonucleoside triphosphates as substrates. The chain is DNA-directed RNA polymerase subunit beta' from Brucella canis (strain ATCC 23365 / NCTC 10854 / RM-666).